A 39-amino-acid polypeptide reads, in one-letter code: Bacteriocin SRCAM 602 (39 aa).

The protein belongs to the bacteriocin class IIA/YGNGV family.

It localises to the secreted. Functionally, bacteriocin with antibacterial activity against C.jejuni. The chain is Bacteriocin SRCAM 602 from Paenibacillus polymyxa (Bacillus polymyxa).